Reading from the N-terminus, the 738-residue chain is Flowering time control protein FCA (738 aa).

Residues 1-118 (MHRGGDRSTD…RGDHSDHDNR (118 aa)) are disordered. Gly residues-rich tracts occupy residues 52–70 (RGGG…GGGR) and 81–98 (SGGG…GEPG). Positions 109–118 (RGDHSDHDNR) are enriched in basic and acidic residues. RRM domains lie at 122–203 (VKLF…YADG) and 213–293 (HKLF…FADP). Disordered regions lie at residues 292 to 414 (DPKR…GHHL) and 566 to 594 (QQSN…AIIP). A compositionally biased stretch (gly residues) spans 301-311 (SRGGPAFGGPG). Positions 342–358 (HPSSPRSAPHQFNNFGS) are enriched in polar residues. The span at 368 to 377 (TVTSTTDTAT) shows a compositional bias: low complexity. 2 stretches are compositionally biased toward polar residues: residues 383–401 (FSGN…SSHM) and 575–594 (PTQG…AIIP). A WW domain is found at 609 to 642 (VPLTCNWTEHTSPEGFKYYYNSITRESKWDKPEE). The segment at 670-738 (MQQLQSPPQA…QSAQERAWKS (69 aa)) is disordered. The span at 683–706 (PAMQPVQQIPQAQQGQQQMQMKQQ) shows a compositional bias: low complexity. Positions 723–732 (RIQQGIQSAQ) are enriched in polar residues.

As to quaternary structure, interacts with FY. Binds to SF1, FIK, RPRD1B, Os09g0509000/LOC_Os09g33480 and MADS8. Mostly expressed in young flowers (panicles) and stems, and also present in young seedlings leaves and roots.

It is found in the nucleus. In terms of biological role, plays a major role in the promotion of the transition of the vegetative meristem to reproductive development. Required for RNA-mediated chromatin silencing of a range of loci in the genome. Cotranscriptionally recognizes aberrant RNA and marks it for silencing. Controls alternative cleavage and polyadenylation on pre-mRNAs and antisense RNAs. Regulates flowering time, seed size and cell volume, probably via the modulation of cell size. The polypeptide is Flowering time control protein FCA (Oryza sativa subsp. japonica (Rice)).